The sequence spans 148 residues: Deoxyuridine 5'-triphosphate nucleotidohydrolase (148 aa).

Substrate is bound by residues 65 to 67 (RSG), asparagine 78, 82 to 84 (TID), and lysine 92.

This sequence belongs to the dUTPase family. Mg(2+) serves as cofactor.

It catalyses the reaction dUTP + H2O = dUMP + diphosphate + H(+). The protein operates within pyrimidine metabolism; dUMP biosynthesis; dUMP from dCTP (dUTP route): step 2/2. Functionally, this enzyme is involved in nucleotide metabolism: it produces dUMP, the immediate precursor of thymidine nucleotides and it decreases the intracellular concentration of dUTP so that uracil cannot be incorporated into DNA. The chain is Deoxyuridine 5'-triphosphate nucleotidohydrolase from Chlorobium luteolum (strain DSM 273 / BCRC 81028 / 2530) (Pelodictyon luteolum).